The chain runs to 187 residues: Ribosome maturation factor RimM (187 aa).

Positions 111–187 constitute a PRC barrel domain; sequence KDEYYWVDLI…RILVDWQADF (77 aa).

Belongs to the RimM family. In terms of assembly, binds ribosomal protein uS19.

Its subcellular location is the cytoplasm. In terms of biological role, an accessory protein needed during the final step in the assembly of 30S ribosomal subunit, possibly for assembly of the head region. Essential for efficient processing of 16S rRNA. May be needed both before and after RbfA during the maturation of 16S rRNA. It has affinity for free ribosomal 30S subunits but not for 70S ribosomes. This chain is Ribosome maturation factor RimM, found in Albidiferax ferrireducens (strain ATCC BAA-621 / DSM 15236 / T118) (Rhodoferax ferrireducens).